Consider the following 167-residue polypeptide: Large ribosomal subunit protein uL10 (167 aa).

The protein belongs to the universal ribosomal protein uL10 family. In terms of assembly, part of the ribosomal stalk of the 50S ribosomal subunit. The N-terminus interacts with L11 and the large rRNA to form the base of the stalk. The C-terminus forms an elongated spine to which L12 dimers bind in a sequential fashion forming a multimeric L10(L12)X complex.

Its function is as follows. Forms part of the ribosomal stalk, playing a central role in the interaction of the ribosome with GTP-bound translation factors. This chain is Large ribosomal subunit protein uL10, found in Streptococcus thermophilus (strain CNRZ 1066).